A 406-amino-acid polypeptide reads, in one-letter code: L-carnitine CoA-transferase (406 aa).

Residues Lys-98 and Arg-105 each contribute to the CoA site. Asp-170 functions as the Nucleophile in the catalytic mechanism.

This sequence belongs to the CoA-transferase III family. CaiB subfamily. Homodimer.

It localises to the cytoplasm. It carries out the reaction crotonobetainyl-CoA + (R)-carnitine = crotonobetaine + (R)-carnitinyl-CoA. The catalysed reaction is 4-(trimethylamino)butanoyl-CoA + (R)-carnitine = (R)-carnitinyl-CoA + 4-(trimethylamino)butanoate. It participates in amine and polyamine metabolism; carnitine metabolism. In terms of biological role, catalyzes the reversible transfer of the CoA moiety from gamma-butyrobetainyl-CoA to L-carnitine to generate L-carnitinyl-CoA and gamma-butyrobetaine. Is also able to catalyze the reversible transfer of the CoA moiety from gamma-butyrobetainyl-CoA or L-carnitinyl-CoA to crotonobetaine to generate crotonobetainyl-CoA. This Proteus mirabilis (strain HI4320) protein is L-carnitine CoA-transferase.